A 266-amino-acid chain; its full sequence is Regulatory protein RecX (266 aa).

Belongs to the RecX family.

The protein localises to the cytoplasm. In terms of biological role, modulates RecA activity. This chain is Regulatory protein RecX, found in Leuconostoc citreum (strain KM20).